We begin with the raw amino-acid sequence, 741 residues long: uncharacterized protein (741 aa).

A run of 5 helical transmembrane segments spans residues 34–54 (WLLW…LLII), 76–96 (LIIP…FING), 120–140 (LAVL…FVSL), 156–176 (LSVF…LIII), and 187–207 (LLLL…AFSI). The segment covering 404 to 423 (EAEEKERQEKEEKEKAEKDN) has biased composition (basic and acidic residues). Disordered stretches follow at residues 404–473 (EAEE…FRPR) and 555–647 (QKEL…ENAK). Positions 424–439 (GNGQDSNKVNSVSTEP) are enriched in polar residues. Basic and acidic residues-rich tracts occupy residues 445-465 (SDAD…DSSK) and 555-573 (QKEL…DQKS). Residues 623 to 643 (DNTDESEDKQSEEEEKFDEEI) show a composition bias toward acidic residues. The next 2 membrane-spanning stretches (helical) occupy residues 655 to 675 (AFFN…ENGA) and 715 to 735 (VIIA…FFAY).

This sequence to M.pneumoniae MPN_333.

It localises to the cell membrane. This is an uncharacterized protein from Mycoplasma pneumoniae (strain ATCC 29342 / M129 / Subtype 1) (Mycoplasmoides pneumoniae).